A 1415-amino-acid chain; its full sequence is DNA-directed RNA polymerase subunit beta' (1415 aa).

Zn(2+) is bound by residues Cys-70, Cys-72, Cys-85, and Cys-88. Mg(2+)-binding residues include Asp-461, Asp-463, and Asp-465. Positions 820, 894, 901, and 904 each coordinate Zn(2+).

The protein belongs to the RNA polymerase beta' chain family. In terms of assembly, the RNAP catalytic core consists of 2 alpha, 1 beta, 1 beta' and 1 omega subunit. When a sigma factor is associated with the core the holoenzyme is formed, which can initiate transcription. Requires Mg(2+) as cofactor. The cofactor is Zn(2+).

The enzyme catalyses RNA(n) + a ribonucleoside 5'-triphosphate = RNA(n+1) + diphosphate. DNA-dependent RNA polymerase catalyzes the transcription of DNA into RNA using the four ribonucleoside triphosphates as substrates. This Cupriavidus necator (strain ATCC 17699 / DSM 428 / KCTC 22496 / NCIMB 10442 / H16 / Stanier 337) (Ralstonia eutropha) protein is DNA-directed RNA polymerase subunit beta'.